The following is a 118-amino-acid chain: MSIKYSNKINKIRTFALSLVFIGLFIAYLGVFFRENIIIMTTFMMVGFLAVIASTVVYFWIGMLSTKTVQIICPSCDKPTKMLGRVDACMHCNQPLTMDRNLEGKEFDEKYNKKSYKA.

The next 2 helical transmembrane spans lie at 12 to 32 and 43 to 63; these read IRTF…LGVF and FMMV…WIGM.

The protein belongs to the UPF0295 family.

It is found in the cell membrane. The protein is UPF0295 protein BCE33L0445 of Bacillus cereus (strain ZK / E33L).